A 227-amino-acid chain; its full sequence is Protein p26 (227 aa).

In terms of assembly, self-associates.

It is found in the host cell junction. The protein resides in the host plasmodesma. This is Protein p26 from Lettuce infectious yellows virus (isolate United States/92) (LIYV).